The primary structure comprises 601 residues: Molybdenum cofactor synthesis protein cinnamon (601 aa).

Residues Ser3–Val153 are MPT adenylyltransferase. Positions Ser173–Pro195 are disordered. The MPT Mo-transferase stretch occupies residues Thr184–Phe596. Ser376 is modified (phosphoserine).

In the N-terminal section; belongs to the MoaB/Mog family. It in the C-terminal section; belongs to the MoeA family. It depends on Mg(2+) as a cofactor.

It catalyses the reaction molybdopterin + ATP + H(+) = adenylyl-molybdopterin + diphosphate. It carries out the reaction adenylyl-molybdopterin + molybdate = Mo-molybdopterin + AMP + H(+). It participates in cofactor biosynthesis; molybdopterin biosynthesis. Catalyzes two steps in the biosynthesis of the molybdenum cofactor. In the first step, molybdopterin is adenylated. Subsequently, molybdate is inserted into adenylated molybdopterin and AMP is released. This chain is Molybdenum cofactor synthesis protein cinnamon (cin), found in Drosophila melanogaster (Fruit fly).